The chain runs to 182 residues: MTTASPSQVRQNYHQDSEAAINRQINLELYASYVYLSMSCYFDRDDVALKNFAKYFLHQSHEEREHAEKLMKLQNQRGGRIFLQDIKKPDRDDWESGLNAMRCALHLEKSVNQSLLELHKLATDKNDPHLCDFIETHYLNEQVKSIKELGDHVTNLRKMGAPESGMAEYLFDKHTLGHGDES.

Met-1 is modified (N-acetylmethionine). Thr-2 bears the N-acetylthreonine; in Ferritin heavy chain, N-terminally processed mark. In terms of domain architecture, Ferritin-like diiron spans Gln-11–Gly-160. The Fe cation site is built by Glu-28, Glu-63, His-66, Glu-108, and Gln-142.

This sequence belongs to the ferritin family. As to quaternary structure, oligomer of 24 subunits. There are two types of subunits: L (light) chain and H (heavy) chain. The major chain can be light or heavy, depending on the species and tissue type. The functional molecule forms a roughly spherical shell with a diameter of 12 nm and contains a central cavity into which the insoluble mineral iron core is deposited. Interacts with NCOA4; NCOA4 promotes targeting of the iron-binding ferritin complex to autolysosomes following starvation or iron depletion.

Its subcellular location is the cytoplasm. The protein localises to the lysosome. The protein resides in the cytoplasmic vesicle. It localises to the autophagosome. The enzyme catalyses 4 Fe(2+) + O2 + 4 H(+) = 4 Fe(3+) + 2 H2O. Its function is as follows. Stores iron in a soluble, non-toxic, readily available form. Important for iron homeostasis. Has ferroxidase activity. Iron is taken up in the ferrous form and deposited as ferric hydroxides after oxidation. Also plays a role in delivery of iron to cells. Mediates iron uptake in capsule cells of the developing kidney. Delivery to lysosomes is mediated by the cargo receptor NCOA4 for autophagic degradation and release of iron. This chain is Ferritin heavy chain (Fth1), found in Rattus norvegicus (Rat).